The sequence spans 832 residues: Protein P (832 aa).

The segment at 1 to 177 is terminal protein domain (TP); sequence MPLSYQHFRK…FCGSPYSWEQ (177 aa). A spacer region spans residues 178–335; sequence ELQHGAESFH…YCLSHIVNLL (158 aa). Positions 186-206 are enriched in polar residues; sequence FHQQSSGILSRPSVGSSLQSK. Disordered stretches follow at residues 186–255 and 280–305; these read FHQQ…GHNA and TSEN…RSQS. Low complexity predominate over residues 210 to 220; the sequence is SRLGLQSQQGH. The segment at 336 to 679 is polymerase/reverse transcriptase domain (RT); the sequence is EDWGPCAEHG…YLNLYPVARQ (344 aa). One can recognise a Reverse transcriptase domain in the interval 346–589; it reads EHHIRIPRTP…YSLNFMGYVI (244 aa). Residues aspartate 418, aspartate 540, and aspartate 541 each coordinate Mg(2+).

The protein belongs to the hepadnaviridae P protein family.

It carries out the reaction DNA(n) + a 2'-deoxyribonucleoside 5'-triphosphate = DNA(n+1) + diphosphate. It catalyses the reaction Endonucleolytic cleavage to 5'-phosphomonoester.. Activated by host HSP70 and HSP40 in vitro to be able to bind the epsilon loop of the pgRNA. Because deletion of the RNase H region renders the protein partly chaperone-independent, the chaperones may be needed indirectly to relieve occlusion of the RNA-binding site by this domain. Inhibited by several reverse-transcriptase inhibitors: Lamivudine, Adefovir and Entecavir. In terms of biological role, multifunctional enzyme that converts the viral RNA genome into dsDNA in viral cytoplasmic capsids. This enzyme displays a DNA polymerase activity that can copy either DNA or RNA templates, and a ribonuclease H (RNase H) activity that cleaves the RNA strand of RNA-DNA heteroduplexes in a partially processive 3'- to 5'-endonucleasic mode. Neo-synthesized pregenomic RNA (pgRNA) are encapsidated together with the P protein, and reverse-transcribed inside the nucleocapsid. Initiation of reverse-transcription occurs first by binding the epsilon loop on the pgRNA genome, and is initiated by protein priming, thereby the 5'-end of (-)DNA is covalently linked to P protein. Partial (+)DNA is synthesized from the (-)DNA template and generates the relaxed circular DNA (RC-DNA) genome. After budding and infection, the RC-DNA migrates in the nucleus, and is converted into a plasmid-like covalently closed circular DNA (cccDNA). The activity of P protein does not seem to be necessary for cccDNA generation, and is presumably released from (+)DNA by host nuclear DNA repair machinery. This chain is Protein P, found in Hepatitis B virus genotype D subtype ayw (isolate Australia/AustKW/1991) (HBV-D).